Consider the following 43-residue polypeptide: Protein PsbN (43 aa).

A helical membrane pass occupies residues 4-24 (ATFVAIFISCLLISFTGYALY).

This sequence belongs to the PsbN family.

It localises to the plastid. The protein localises to the chloroplast thylakoid membrane. May play a role in photosystem I and II biogenesis. In Marchantia polymorpha (Common liverwort), this protein is Protein PsbN.